The chain runs to 392 residues: ESX-1 secretion-associated protein EspA (392 aa).

The disordered stretch occupies residues 302–392; sequence TRQALRPRAD…GQKVLVRNVV (91 aa). Residues 334–344 show a composition bias toward gly residues; that stretch reads QGMGGPVGMGG.

In terms of assembly, homodimer; disulfide-linked. An artificial EsxB-EsxA heterodimer interacts with EspA.

Its subcellular location is the secreted. Functionally, required for secretion of EsxA (ESAT-6) and EsxB (CFP-10) and for virulence. Involved in translocation of bacteria from the host (human) phagolysosome to the host cytoplasm. In Mycobacterium tuberculosis (strain ATCC 25618 / H37Rv), this protein is ESX-1 secretion-associated protein EspA.